A 767-amino-acid polypeptide reads, in one-letter code: Bifunctional lysine-specific demethylase and histidyl-hydroxylase NO66 (767 aa).

The disordered stretch occupies residues 21–324; that stretch reads TVSQKQQREK…GRQEAHRQNS (304 aa). Ser44 carries the phosphoserine modification. The segment covering 46–71 has biased composition (acidic residues); sequence SDDDDEDDGEGEDDNDSNSDEDESGS. The segment covering 72–81 has biased composition (low complexity); the sequence is ESDATSADDS. Over residues 82–98 the composition is skewed to acidic residues; it reads FSSDDNDDDDSGDEDGS. Composition is skewed to polar residues over residues 127 to 137 and 177 to 199; these read YTINSENSSVE and ESAT…TSKP. Ser214 carries the phosphoserine modification. Residues 262–279 show a composition bias toward polar residues; sequence PSSSGASCPLPSKTSKQV. Residues 315-324 are compositionally biased toward basic and acidic residues; the sequence is GRQEAHRQNS. In terms of domain architecture, JmjC spans 420–565; the sequence is CSIRILNPST…NLLEKLMPMV (146 aa). His466, Asp468, and His531 together coordinate Fe cation.

This sequence belongs to the ROX family. NO66 subfamily. It depends on Fe(2+) as a cofactor.

Its subcellular location is the nucleus. It carries out the reaction N(6),N(6)-dimethyl-L-lysyl(36)-[histone H3] + 2 2-oxoglutarate + 2 O2 = L-lysyl(36)-[histone H3] + 2 formaldehyde + 2 succinate + 2 CO2. Functionally, oxygenase that can act as both a histone lysine demethylase and a ribosomal histidine hydroxylase. Specifically demethylates 'Lys-4' (H3K4me) and 'Lys-36' (H3K36me) of histone H3, thereby playing a central role in histone code. The chain is Bifunctional lysine-specific demethylase and histidyl-hydroxylase NO66 from Drosophila willistoni (Fruit fly).